We begin with the raw amino-acid sequence, 287 residues long: Glutamate racemase (287 aa).

Residues 1-15 (MATKPQDANTTSREA) are compositionally biased toward polar residues. The disordered stretch occupies residues 1–25 (MATKPQDANTTSREAITSKADSPPR). Substrate is bound by residues 32–33 (DS) and 64–65 (YG). Catalysis depends on Cys96, which acts as the Proton donor/acceptor. Residue 97–98 (NT) coordinates substrate. Catalysis depends on Cys208, which acts as the Proton donor/acceptor. Residue 209–210 (TH) coordinates substrate.

This sequence belongs to the aspartate/glutamate racemases family.

It catalyses the reaction L-glutamate = D-glutamate. The protein operates within cell wall biogenesis; peptidoglycan biosynthesis. In terms of biological role, provides the (R)-glutamate required for cell wall biosynthesis. This Yersinia pseudotuberculosis serotype O:3 (strain YPIII) protein is Glutamate racemase.